We begin with the raw amino-acid sequence, 175 residues long: Peptide methionine sulfoxide reductase MsrA (175 aa).

C12 is an active-site residue.

This sequence belongs to the MsrA Met sulfoxide reductase family.

The enzyme catalyses L-methionyl-[protein] + [thioredoxin]-disulfide + H2O = L-methionyl-(S)-S-oxide-[protein] + [thioredoxin]-dithiol. It catalyses the reaction [thioredoxin]-disulfide + L-methionine + H2O = L-methionine (S)-S-oxide + [thioredoxin]-dithiol. Its function is as follows. Has an important function as a repair enzyme for proteins that have been inactivated by oxidation. Catalyzes the reversible oxidation-reduction of methionine sulfoxide in proteins to methionine. The protein is Peptide methionine sulfoxide reductase MsrA of Limosilactobacillus reuteri (strain DSM 20016) (Lactobacillus reuteri).